Consider the following 454-residue polypeptide: Notoamide E oxidase notB (454 aa).

Residues 15-35 (SPAELTVIIVGLGIAGLTAAI) traverse the membrane as a helical segment. Glutamate 48 and glycine 61 together coordinate FAD. An N-linked (GlcNAc...) asparagine glycan is attached at asparagine 75. Residue arginine 121 coordinates FAD. Catalysis depends on residues arginine 199 and tyrosine 229. Residues aspartate 322 and glycine 335 each contribute to the FAD site.

Belongs to the paxM FAD-dependent monooxygenase family. Requires FAD as cofactor.

It is found in the membrane. The catalysed reaction is notoamide E + NADPH + O2 + H(+) = notoamide C + NADP(+) + H2O. It carries out the reaction notoamide E + NADPH + O2 + H(+) = notoamide D + NADP(+) + H2O. The protein operates within alkaloid biosynthesis. FAD-dependent monooxygenase; part of the gene cluster that mediates the biosynthesis of notoamide, a fungal indole alkaloid that belongs to a family of natural products containing a characteristic bicyclo[2.2.2]diazaoctane core. The first step of notoamide biosynthesis involves coupling of L-proline and L-tryptophan by the bimodular NRPS notE, to produce cyclo-L-tryptophan-L-proline called brevianamide F. The reverse prenyltransferase notF then acts as a deoxybrevianamide E synthase and converts brevianamide F to deoxybrevianamide E via reverse prenylation at C-2 of the indole ring leading to the bicyclo[2.2.2]diazaoctane core. Deoxybrevianamide E is further hydroxylated at C-6 of the indole ring, likely catalyzed by the cytochrome P450 monooxygenase notG, to yield 6-hydroxy-deoxybrevianamide E. 6-hydroxy-deoxybrevianamide E is a specific substrate of the prenyltransferase notC for normal prenylation at C-7 to produce 6-hydroxy-7-prenyl-deoxybrevianamide, also called notoamide S. As the proposed pivotal branching point in notoamide biosynthesis, notoamide S can be diverted to notoamide E through an oxidative pyran ring closure putatively catalyzed by either notH cytochrome P450 monooxygenase or the notD FAD-linked oxidoreductase. This step would be followed by an indole 2,3-epoxidation-initiated pinacol-like rearrangement catalyzed by the notB FAD-dependent monooxygenase leading to the formation of notoamide C and notoamide D. On the other hand notoamide S is converted to notoamide T by notH (or notD), a bifunctional oxidase that also functions as the intramolecular Diels-Alderase responsible for generation of (+)-notoamide T. To generate antipodal (-)-notoaminide T, notH' (or notD') in Aspergillus versicolor is expected to catalyze a Diels-Alder reaction leading to the opposite stereochemistry. The remaining oxidoreductase notD (or notH) likely catalyzes the oxidative pyran ring formation to yield (+)-stephacidin A. The FAD-dependent monooxygenase notI is highly similar to notB and is predicted to catalyze a similar conversion from (+)-stephacidin A to (-)-notoamide B via the 2,3-epoxidation of (+)-stephacidin A followed by a pinacol-type rearrangement. Finally, it remains unclear which enzyme could be responsible for the final hydroxylation steps leading to notoamide A and sclerotiamide. This is Notoamide E oxidase notB from Aspergillus sp. (strain MF297-2).